A 107-amino-acid polypeptide reads, in one-letter code: UPF0122 protein MYPE4850 (107 aa).

This sequence belongs to the UPF0122 family.

Might take part in the signal recognition particle (SRP) pathway. This is inferred from the conservation of its genetic proximity to ftsY/ffh. May be a regulatory protein. The sequence is that of UPF0122 protein MYPE4850 from Malacoplasma penetrans (strain HF-2) (Mycoplasma penetrans).